Consider the following 216-residue polypeptide: Peptide methionine sulfoxide reductase MsrA (216 aa).

Cysteine 54 is an active-site residue.

The protein belongs to the MsrA Met sulfoxide reductase family.

The enzyme catalyses L-methionyl-[protein] + [thioredoxin]-disulfide + H2O = L-methionyl-(S)-S-oxide-[protein] + [thioredoxin]-dithiol. It catalyses the reaction [thioredoxin]-disulfide + L-methionine + H2O = L-methionine (S)-S-oxide + [thioredoxin]-dithiol. Its function is as follows. Has an important function as a repair enzyme for proteins that have been inactivated by oxidation. Catalyzes the reversible oxidation-reduction of methionine sulfoxide in proteins to methionine. This chain is Peptide methionine sulfoxide reductase MsrA, found in Xanthomonas oryzae pv. oryzae (strain PXO99A).